The chain runs to 509 residues: tRNA (guanine(37)-N(1))-methyltransferase (509 aa).

A mitochondrion-targeting transit peptide spans 1–57 (MVLWILWRPFGFSRRLLKLERHSITESKSLIPLAWTSLTQTLSESPGIFLLGQRKRF). S-adenosyl-L-methionine-binding positions include His289, 327–328 (DL), 355–356 (DG), and Asn387. A disordered region spans residues 478 to 509 (TKNPENHEDPPLKRQRTAEAFSDEKTQIASNT).

This sequence belongs to the class I-like SAM-binding methyltransferase superfamily. TRM5/TYW2 family. Monomer.

Its subcellular location is the mitochondrion matrix. The protein localises to the nucleus. It is found in the cytoplasm. It carries out the reaction guanosine(37) in tRNA + S-adenosyl-L-methionine = N(1)-methylguanosine(37) in tRNA + S-adenosyl-L-homocysteine + H(+). Its function is as follows. Involved in mitochondrial tRNA methylation. Specifically methylates the N1 position of guanosine-37 in various tRNAs. Methylation is not dependent on the nature of the nucleoside 5' of the target nucleoside. This is the first step in the biosynthesis of wybutosine (yW), a modified base adjacent to the anticodon of tRNAs and required for accurate decoding. The chain is tRNA (guanine(37)-N(1))-methyltransferase from Macaca mulatta (Rhesus macaque).